Here is a 240-residue protein sequence, read N- to C-terminus: Ribonuclease HII (240 aa).

Positions 27–226 (GPVAGVDEAG…GETRSLRLED (200 aa)) constitute an RNase H type-2 domain. Residues Asp-33, Glu-34, and Asp-127 each coordinate a divalent metal cation.

It belongs to the RNase HII family. The cofactor is Mn(2+). Mg(2+) serves as cofactor.

The protein resides in the cytoplasm. The catalysed reaction is Endonucleolytic cleavage to 5'-phosphomonoester.. Functionally, endonuclease that specifically degrades the RNA of RNA-DNA hybrids. The sequence is that of Ribonuclease HII from Parafrankia sp. (strain EAN1pec).